Reading from the N-terminus, the 389-residue chain is Gastricsin (389 aa).

The first 16 residues, 1–16, serve as a signal peptide directing secretion; the sequence is MKWMVVALVCLQLLEA. Positions 17-59 are cleaved as a propeptide — activation peptide; that stretch reads KVTKVTLKKFKSIRENLREQGLLEDFLKTNHYDPAQKYHFGDF. Positions 73 to 386 constitute a Peptidase A1 domain; the sequence is YFGEISIGTP…DMGNNRVGFA (314 aa). The active site involves Asp91. Cystine bridges form between Cys104-Cys109 and Cys268-Cys272. Asp277 is an active-site residue. The cysteines at positions 311 and 344 are disulfide-linked.

The protein belongs to the peptidase A1 family.

It is found in the secreted. It catalyses the reaction More restricted specificity than pepsin A, but shows preferential cleavage at Tyr-|-Xaa bonds. High activity on hemoglobin.. In terms of biological role, hydrolyzes a variety of proteins. This is Gastricsin (PGC) from Suncus murinus (Asian house shrew).